A 1500-amino-acid polypeptide reads, in one-letter code: Copper-transporting ATPase 1 (1500 aa).

Residues 1-653 (MDPSMGVNSV…KREIRQWRRS (653 aa)) lie on the Cytoplasmic side of the membrane. HMA domains lie at 8–74 (NSVT…FDAV) and 85–151 (TDTL…LDTG). Residues Thr18, Cys19, and Cys22 each contribute to the Cu(+) site. Residue Thr152 is modified to Phosphothreonine. Positions 171–237 (VVLKMKVEGM…QIEAMGFPAF (67 aa)) constitute an HMA 3 domain. Residues Cys182 and Cys185 each contribute to the Cu(+) site. Phosphoserine is present on Ser270. In terms of domain architecture, HMA 4 spans 277-343 (STATFIIDGM…AIEAVSPGLY (67 aa)). Residues Cys288 and Cys291 each coordinate Cu(+). The residue at position 327 (Thr327) is a Phosphothreonine. Phosphoserine is present on residues Ser339, Ser353, Ser357, and Ser362. 3 HMA domains span residues 377–443 (QETV…FDAT), 488–554 (SKCY…FGAT), and 564–630 (GVLE…FEAS). Cu(+)-binding residues include Cys388, Cys391, Cys499, Cys502, Cys575, and Cys578. The chain crosses the membrane as a helical span at residues 654-675 (FLVSLFFCIPVMGLMIYMMVMD). Residues 676-714 (HHFATLHHNQNMSKEEMINLHSSMFLERQILPGLSVMNL) are Extracellular-facing. N-linked (GlcNAc...) asparagine glycosylation is present at Asn686. The chain crosses the membrane as a helical span at residues 715–734 (LSFLLCVPVQFFGGWYFYIQ). At 735-741 (AYKALKH) the chain is on the cytoplasmic side. The chain crosses the membrane as a helical span at residues 742–762 (KTANMDVLIVLATTIAFAYSL). Residues 763–781 (IILLVAMYERAKVNPITFF) are Extracellular-facing. Residues 782–802 (DTPPMLFVFIALGRWLEHIAK) traverse the membrane as a helical segment. Residues 803-936 (GKTSEALAKL…KAPIQQFADK (134 aa)) are Cytoplasmic-facing. The helical transmembrane segment at 937 to 959 (LSGYFVPFIVFVSIATLLVWIVI) threads the bilayer. At 960-989 (GFLNFEIVETYFPGYNRSISRTETIIRFAF) the chain is on the extracellular side. A glycan (N-linked (GlcNAc...) asparagine) is linked at Asn975. Residues 990 to 1011 (QASITVLCIACPCSLGLATPTA) traverse the membrane as a helical segment. Topologically, residues 1012–1356 (VMVGTGVGAQ…LSRKTVKRIR (345 aa)) are cytoplasmic. Catalysis depends on Asp1044, which acts as the 4-aspartylphosphate intermediate. Position 1081 (Glu1081) interacts with ATP. Position 1212 is a phosphothreonine (Thr1212). The Mg(2+) site is built by Asp1301 and Asp1305. The chain crosses the membrane as a helical span at residues 1357–1374 (INFVFALIYNLVGIPIAA). Residues 1375 to 1385 (GVFMPIGLVLQ) lie on the Extracellular side of the membrane. A helical membrane pass occupies residues 1386–1405 (PWMGSAAMAASSVSVVLSSL). The Cytoplasmic portion of the chain corresponds to 1406–1500 (FLKLYRKPTY…DFREDDDTAL (95 aa)). Residues Ser1430, Ser1432, Ser1460, Ser1463, and Ser1466 each carry the phosphoserine modification. An Endocytosis signal motif is present at residues 1467-1468 (LL). Residues Ser1469, Ser1473, Ser1476, and Ser1486 each carry the phosphoserine modification. The tract at residues 1486-1500 (SLLVGDFREDDDTAL) is PDZD11-binding. The Endocytosis signal signature appears at 1487 to 1488 (LL).

This sequence belongs to the cation transport ATPase (P-type) (TC 3.A.3) family. Type IB subfamily. Monomer. Interacts with PDZD11. Interacts with ATOX1 and COMMD1. Interacts with TYRP1. Directly interacts with SOD3; this interaction is copper-dependent and is required for SOD3 activity. As to expression, widely expressed including in heart, brain, lung, muscle, kidney, pancreas, and to a lesser extent placenta. Expressed in fibroblasts, aortic smooth muscle cells, aortic endothelial cells and umbilical vein endothelial cells (at protein level). In terms of tissue distribution, expressed in cerebellum and brain cortex.

It localises to the golgi apparatus. Its subcellular location is the trans-Golgi network membrane. The protein localises to the cell membrane. The protein resides in the melanosome membrane. It is found in the early endosome membrane. It localises to the cell projection. Its subcellular location is the axon. The protein localises to the dendrite. The protein resides in the postsynaptic density. It is found in the cytoplasm. It localises to the cytosol. Its subcellular location is the endoplasmic reticulum. The enzyme catalyses Cu(+)(in) + ATP + H2O = Cu(+)(out) + ADP + phosphate + H(+). Functionally, ATP-driven copper (Cu(+)) ion pump that plays an important role in intracellular copper ion homeostasis. Within a catalytic cycle, acquires Cu(+) ion from donor protein on the cytoplasmic side of the membrane and delivers it to acceptor protein on the lumenal side. The transfer of Cu(+) ion across the membrane is coupled to ATP hydrolysis and is associated with a transient phosphorylation that shifts the pump conformation from inward-facing to outward-facing state. Under physiological conditions, at low cytosolic copper concentration, it is localized at the trans-Golgi network (TGN) where it transfers Cu(+) ions to cuproenzymes of the secretory pathway. Upon elevated cytosolic copper concentrations, it relocalizes to the plasma membrane where it is responsible for the export of excess Cu(+) ions. May play a dual role in neuron function and survival by regulating cooper efflux and neuronal transmission at the synapse as well as by supplying Cu(+) ions to enzymes such as PAM, TYR and SOD3. In the melanosomes of pigmented cells, provides copper cofactor to TYR to form an active TYR holoenzyme for melanin biosynthesis. This chain is Copper-transporting ATPase 1, found in Homo sapiens (Human).